A 350-amino-acid chain; its full sequence is Phenylalanine--tRNA ligase alpha subunit (350 aa).

A Mg(2+)-binding site is contributed by E259.

It belongs to the class-II aminoacyl-tRNA synthetase family. Phe-tRNA synthetase alpha subunit type 1 subfamily. In terms of assembly, tetramer of two alpha and two beta subunits. Mg(2+) is required as a cofactor.

The protein resides in the cytoplasm. It carries out the reaction tRNA(Phe) + L-phenylalanine + ATP = L-phenylalanyl-tRNA(Phe) + AMP + diphosphate + H(+). The chain is Phenylalanine--tRNA ligase alpha subunit from Rickettsia typhi (strain ATCC VR-144 / Wilmington).